The chain runs to 621 residues: F-box/LRR-repeat protein 4 (621 aa).

The residue at position 28 (R28) is an Asymmetric dimethylarginine. Residues N277 to L332 form the F-box domain. LRR repeat units lie at residues E376–S397, N402–H421, S427–N448, E452–I474, N480–A501, C504–C524, L532–C558, T559–S583, and C584–S609.

Part of a SCF (SKP1-CUL1-F-box) protein ligase complex. Interacts with FAF2 and VCP. Interacts with PPTC7; this interaction promotes destruction of BNIP3 and NIX and mitophagy suppression.

The protein resides in the cytoplasm. Its subcellular location is the nucleus. It is found in the mitochondrion outer membrane. Its function is as follows. Substrate-recognition component of the mitochondria-localized SCF-FBXL4 ubiquitin E3 ligase complex that plays a role in the restriction of mitophagy by controlling the degradation of BNIP3 and NIX mitophagy receptors. Also rescues mitochondrial injury through reverting hyperactivation of DRP1-mediated mitochondrial fission. The sequence is that of F-box/LRR-repeat protein 4 (Fbxl4) from Mus musculus (Mouse).